We begin with the raw amino-acid sequence, 227 residues long: Venom allergen 5 (227 aa).

The signal sequence occupies residues 1–23 (MEISGLVYLIIIVTIIDLPYGKA). 4 disulfides stabilise this stretch: Cys27/Cys40, Cys31/Cys124, Cys49/Cys117, and Cys193/Cys210. The SCP domain maps to 68 to 212 (LKEHNDFRQK…WHYHYLVCNY (145 aa)).

It belongs to the CRISP family. Venom allergen 5-like subfamily. In terms of tissue distribution, expressed by the venom gland.

It localises to the secreted. The sequence is that of Venom allergen 5 from Vespula maculifrons (Eastern yellow jacket).